Here is a 369-residue protein sequence, read N- to C-terminus: tRNA-specific 2-thiouridylase MnmA (369 aa).

ATP is bound by residues G10–S17 and L36. Catalysis depends on C97, which acts as the Nucleophile. C97 and C196 are oxidised to a cystine. Residue G122 participates in ATP binding. The interaction with tRNA stretch occupies residues K146–Q148. C196 functions as the Cysteine persulfide intermediate in the catalytic mechanism. The interaction with tRNA stretch occupies residues R301–Y302.

Belongs to the MnmA/TRMU family.

The protein resides in the cytoplasm. The catalysed reaction is S-sulfanyl-L-cysteinyl-[protein] + uridine(34) in tRNA + AH2 + ATP = 2-thiouridine(34) in tRNA + L-cysteinyl-[protein] + A + AMP + diphosphate + H(+). Catalyzes the 2-thiolation of uridine at the wobble position (U34) of tRNA, leading to the formation of s(2)U34. The polypeptide is tRNA-specific 2-thiouridylase MnmA (Thermosynechococcus vestitus (strain NIES-2133 / IAM M-273 / BP-1)).